Reading from the N-terminus, the 177-residue chain is Large ribosomal subunit protein uL6 (177 aa).

Belongs to the universal ribosomal protein uL6 family. Part of the 50S ribosomal subunit.

This protein binds to the 23S rRNA, and is important in its secondary structure. It is located near the subunit interface in the base of the L7/L12 stalk, and near the tRNA binding site of the peptidyltransferase center. In Rickettsia africae (strain ESF-5), this protein is Large ribosomal subunit protein uL6.